Consider the following 239-residue polypeptide: Putative GEM-like protein 3 (239 aa).

Positions 29–68 (HWNPELVSESPAPDEKALSSSSAARSNPYVARAPTETSDA) are disordered. The GRAM domain occupies 128-191 (KIFRQTFETV…HQLKSVNPSI (64 aa)).

Belongs to the GEM family.

In Arabidopsis thaliana (Mouse-ear cress), this protein is Putative GEM-like protein 3.